The chain runs to 156 residues: Small ribosomal subunit protein uS7 (156 aa).

This sequence belongs to the universal ribosomal protein uS7 family. As to quaternary structure, part of the 30S ribosomal subunit. Contacts proteins S9 and S11.

Its function is as follows. One of the primary rRNA binding proteins, it binds directly to 16S rRNA where it nucleates assembly of the head domain of the 30S subunit. Is located at the subunit interface close to the decoding center, probably blocks exit of the E-site tRNA. The protein is Small ribosomal subunit protein uS7 of Wigglesworthia glossinidia brevipalpis.